We begin with the raw amino-acid sequence, 871 residues long: DNA mismatch repair protein MutS (871 aa).

625-632 (GPNMAGKS) serves as a coordination point for ATP.

Belongs to the DNA mismatch repair MutS family.

In terms of biological role, this protein is involved in the repair of mismatches in DNA. It is possible that it carries out the mismatch recognition step. This protein has a weak ATPase activity. This Chlorobium limicola (strain DSM 245 / NBRC 103803 / 6330) protein is DNA mismatch repair protein MutS.